The sequence spans 327 residues: Methionyl-tRNA formyltransferase (327 aa).

Position 122 to 125 (122 to 125 (SLLP)) interacts with (6S)-5,6,7,8-tetrahydrofolate.

It belongs to the Fmt family.

The catalysed reaction is L-methionyl-tRNA(fMet) + (6R)-10-formyltetrahydrofolate = N-formyl-L-methionyl-tRNA(fMet) + (6S)-5,6,7,8-tetrahydrofolate + H(+). Attaches a formyl group to the free amino group of methionyl-tRNA(fMet). The formyl group appears to play a dual role in the initiator identity of N-formylmethionyl-tRNA by promoting its recognition by IF2 and preventing the misappropriation of this tRNA by the elongation apparatus. This Ralstonia pickettii (strain 12J) protein is Methionyl-tRNA formyltransferase.